The sequence spans 448 residues: Homogentisate 1,2-dioxygenase (448 aa).

His-303 (proton acceptor) is an active-site residue. Fe cation-binding residues include His-346 and Glu-352. Residues Tyr-361 and His-382 each coordinate homogentisate. His-382 contacts Fe cation.

The protein belongs to the homogentisate dioxygenase family. As to quaternary structure, hexamer; dimer of trimers. Fe cation is required as a cofactor.

It catalyses the reaction homogentisate + O2 = 4-maleylacetoacetate + H(+). Its pathway is amino-acid degradation; L-phenylalanine degradation; acetoacetate and fumarate from L-phenylalanine: step 4/6. Functionally, involved in the catabolism of homogentisate (2,5-dihydroxyphenylacetate or 2,5-OH-PhAc), a central intermediate in the degradation of phenylalanine and tyrosine. Catalyzes the oxidative ring cleavage of the aromatic ring of homogentisate to yield maleylacetoacetate. This Nitrobacter hamburgensis (strain DSM 10229 / NCIMB 13809 / X14) protein is Homogentisate 1,2-dioxygenase.